A 443-amino-acid chain; its full sequence is Xaa-Pro dipeptidase (443 aa).

5 residues coordinate Mn(2+): Asp246, Asp257, His339, Glu384, and Glu423.

This sequence belongs to the peptidase M24B family. Bacterial-type prolidase subfamily. Mn(2+) serves as cofactor.

It catalyses the reaction Xaa-L-Pro dipeptide + H2O = an L-alpha-amino acid + L-proline. Functionally, splits dipeptides with a prolyl residue in the C-terminal position. In Erwinia tasmaniensis (strain DSM 17950 / CFBP 7177 / CIP 109463 / NCPPB 4357 / Et1/99), this protein is Xaa-Pro dipeptidase.